We begin with the raw amino-acid sequence, 398 residues long: Protein CDKN2AIP homolog A (398 aa).

Residues L19 to S124 enclose the XRN2-binding (XTBD) domain. The disordered stretch occupies residues K118–R245. A compositionally biased stretch (basic and acidic residues) spans E131–S147. 3 stretches are compositionally biased toward polar residues: residues S154–L163, R189–S199, and Q226–N238.

This sequence belongs to the CARF family.

It localises to the nucleus. The protein localises to the nucleoplasm. May regulate DNA damage response and cell proliferation. This chain is Protein CDKN2AIP homolog A (cdkn2aip-a), found in Xenopus laevis (African clawed frog).